Reading from the N-terminus, the 430-residue chain is Glutamate-1-semialdehyde 2,1-aminomutase (430 aa).

N6-(pyridoxal phosphate)lysine is present on Lys267.

This sequence belongs to the class-III pyridoxal-phosphate-dependent aminotransferase family. HemL subfamily. Homodimer. Pyridoxal 5'-phosphate is required as a cofactor.

It is found in the cytoplasm. It carries out the reaction (S)-4-amino-5-oxopentanoate = 5-aminolevulinate. It participates in porphyrin-containing compound metabolism; protoporphyrin-IX biosynthesis; 5-aminolevulinate from L-glutamyl-tRNA(Glu): step 2/2. This chain is Glutamate-1-semialdehyde 2,1-aminomutase, found in Sulfurovum sp. (strain NBC37-1).